We begin with the raw amino-acid sequence, 240 residues long: Rho GDP-dissociation inhibitor 1 (240 aa).

The tract at residues 1-66 (MSLVSGARDM…DDDSKLQLGP (66 aa)) is disordered.

It belongs to the Rho GDI family. As to quaternary structure, interacts with RAC-like GTP binding proteins ARAC5/ROP4 and ARAC3/ROP6.

The protein resides in the cytoplasm. Regulates the GDP/GTP exchange reaction of the Rho proteins by inhibiting the dissociation of GDP from them, and the subsequent binding of GTP to them. The protein is Rho GDP-dissociation inhibitor 1 (GDI1) of Arabidopsis thaliana (Mouse-ear cress).